A 166-amino-acid chain; its full sequence is MFPMVTEFMNYGQQTIRAARYIGQGFMITLSHANRLPVTIQYPYEKLITSERFRGRIHFEFDKCIACEVCVRVCPIDLPVVDWKLETDIRKKRLLNYSIDFGICIFCGNCVEYCPTNCLSMTEEYELSTYDRHELNYNQIALGRLPMSIIDDYTIRTILNLPEIKT.

4Fe-4S ferredoxin-type domains lie at 55–84 (GRIH…VDWK) and 95–124 (LNYS…MTEE). Cys-64, Cys-67, Cys-70, Cys-74, Cys-104, Cys-107, Cys-110, and Cys-114 together coordinate [4Fe-4S] cluster.

It belongs to the complex I 23 kDa subunit family. NDH is composed of at least 16 different subunits, 5 of which are encoded in the nucleus. Requires [4Fe-4S] cluster as cofactor.

It localises to the plastid. The protein resides in the chloroplast thylakoid membrane. It carries out the reaction a plastoquinone + NADH + (n+1) H(+)(in) = a plastoquinol + NAD(+) + n H(+)(out). The catalysed reaction is a plastoquinone + NADPH + (n+1) H(+)(in) = a plastoquinol + NADP(+) + n H(+)(out). Its function is as follows. NDH shuttles electrons from NAD(P)H:plastoquinone, via FMN and iron-sulfur (Fe-S) centers, to quinones in the photosynthetic chain and possibly in a chloroplast respiratory chain. The immediate electron acceptor for the enzyme in this species is believed to be plastoquinone. Couples the redox reaction to proton translocation, and thus conserves the redox energy in a proton gradient. The polypeptide is NAD(P)H-quinone oxidoreductase subunit I, chloroplastic (Oxypappus scaber).